Here is a 191-residue protein sequence, read N- to C-terminus: Protein Ves (191 aa).

The protein belongs to the Ves family.

The protein is Protein Ves of Shigella flexneri.